A 199-amino-acid polypeptide reads, in one-letter code: Shikimate kinase (199 aa).

An ATP-binding site is contributed by 14–19 (GSGKST). Residue S18 coordinates Mg(2+). Positions 36, 60, and 82 each coordinate substrate. R120 lines the ATP pocket. R147 is a substrate binding site. The disordered stretch occupies residues 179-199 (YVRRAEKNQNSHSQTKKQSRK).

Belongs to the shikimate kinase family. As to quaternary structure, monomer. The cofactor is Mg(2+).

The protein resides in the cytoplasm. It carries out the reaction shikimate + ATP = 3-phosphoshikimate + ADP + H(+). It functions in the pathway metabolic intermediate biosynthesis; chorismate biosynthesis; chorismate from D-erythrose 4-phosphate and phosphoenolpyruvate: step 5/7. In terms of biological role, catalyzes the specific phosphorylation of the 3-hydroxyl group of shikimic acid using ATP as a cosubstrate. This chain is Shikimate kinase, found in Chlorobium phaeobacteroides (strain BS1).